The primary structure comprises 267 residues: Tryptophan synthase alpha chain (267 aa).

Catalysis depends on proton acceptor residues Glu49 and Asp60.

The protein belongs to the TrpA family. In terms of assembly, tetramer of two alpha and two beta chains.

The enzyme catalyses (1S,2R)-1-C-(indol-3-yl)glycerol 3-phosphate + L-serine = D-glyceraldehyde 3-phosphate + L-tryptophan + H2O. Its pathway is amino-acid biosynthesis; L-tryptophan biosynthesis; L-tryptophan from chorismate: step 5/5. In terms of biological role, the alpha subunit is responsible for the aldol cleavage of indoleglycerol phosphate to indole and glyceraldehyde 3-phosphate. This chain is Tryptophan synthase alpha chain, found in Citrifermentans bemidjiense (strain ATCC BAA-1014 / DSM 16622 / JCM 12645 / Bem) (Geobacter bemidjiensis).